Reading from the N-terminus, the 513-residue chain is Cytochrome P450 monooxygenase ARMGADRAFT_1018418 (513 aa).

Residues 1 to 21 (MTHASSAWFLAAVVIVTFIVV) form a helical membrane-spanning segment. Cys435 provides a ligand contact to heme. The N-linked (GlcNAc...) asparagine glycan is linked to Asn442.

The protein belongs to the cytochrome P450 family. Requires heme as cofactor.

It is found in the membrane. The protein operates within secondary metabolite biosynthesis. Cytochrome P450 monooxygenase, part of the gene cluster that mediates the biosynthesis of melleolides, a range of antifungal and phytotoxic polyketide derivatives composed of an orsellinic acid (OA) moiety esterified to various sesquiterpene alcohols. The first step in melleolides biosynthesis is performed by the delta(6)-protoilludene synthase PRO1 which catalyzes the cyclization of farnesyl diphosphate to protoilludene. The orsellinic acid synthase armB produces OA by condensing acetyl-CoA with 3 malonyl-CoA units in a three-round chain elongation reaction folowed by a C2-C7 ring closure. ArmB further catalyzes the trans-esterification of OA to the various sesquiterpene alcohols resulting from the hydroxylation of protoilludene. The melleolides cluster also includes 5 cytochrome P450 monooxygenases, 4 NAD(+)-dependent oxidoreductases, one flavin-dependent oxidoreductase, and one O-methyltransferase. The cytochrome P450 monooxygenases may be involved in protoilludene hydroxylation to elaborate melleolides with multiple alcohol groups, such as melleolide D, which carries alcohol functionalities at C-4, C-5, C-10, and C-13. The role of the NAD(+)-dependent enzymes remains unknown. Numerous melleolides, including arnamial, show 5'-O-methylation of the aromatic moiety which may be catalyzed by the methyltransferase encoded in the cluster. The flavin-dependent oxidoreductase might represent the dehydrogenase yielding the aldehyde in position 1 of arnamial and other melleolides. Finally, several halogenase localized outside of the cluster, are able to catalyze the transfer of a single chlorine atom to the melleolide backbone, resulting in a 6'-chloromelleolide product. In Armillaria gallica (Bulbous honey fungus), this protein is Cytochrome P450 monooxygenase ARMGADRAFT_1018418.